The primary structure comprises 292 residues: MHEKYKKQLLILTGMSGAGKTVAAHSLEDVGYFVVDNLPPELLGNFWDLMNTSEDFEKVAVVIDLRVKSFYKDLIDEINSLEDSGQTQATIVFLEASDDTLVARYKETRRLPPLAENGRLLDGIRDERRILTPVRNRSNYILDTSKMTTKELKQKLQSKFGELHKPKFGIEVMSFGFKYGMPIDADIVMDVRFLPNPFYIPELRPFTGLDKRVFNYVMDKDETKVFYGKLLDLLLTAIPGYIDEGKEKLTIAIGCTGGQHRSVSIAQQLARDLSEKYPVDITHREISRYLRK.

14-21 (GMSGAGKT) contributes to the ATP binding site. 64 to 67 (DLRV) is a binding site for GTP.

The protein belongs to the RapZ-like family.

Displays ATPase and GTPase activities. This Lactobacillus delbrueckii subsp. bulgaricus (strain ATCC 11842 / DSM 20081 / BCRC 10696 / JCM 1002 / NBRC 13953 / NCIMB 11778 / NCTC 12712 / WDCM 00102 / Lb 14) protein is Nucleotide-binding protein Ldb0621.